The primary structure comprises 454 residues: Cobyrinate a,c-diamide synthase (454 aa).

The GATase cobBQ-type domain maps to 244-435 (KIAVAYDSAF…VHIHFLSNIA (192 aa)). The active-site Nucleophile is the cysteine 327.

The protein belongs to the CobB/CbiA family. Requires Mg(2+) as cofactor.

The catalysed reaction is cob(II)yrinate + 2 L-glutamine + 2 ATP + 2 H2O = cob(II)yrinate a,c diamide + 2 L-glutamate + 2 ADP + 2 phosphate + 2 H(+). It participates in cofactor biosynthesis; adenosylcobalamin biosynthesis; cob(II)yrinate a,c-diamide from sirohydrochlorin (anaerobic route): step 10/10. Functionally, catalyzes the ATP-dependent amidation of the two carboxylate groups at positions a and c of cobyrinate, using either L-glutamine or ammonia as the nitrogen source. This chain is Cobyrinate a,c-diamide synthase, found in Thermoplasma volcanium (strain ATCC 51530 / DSM 4299 / JCM 9571 / NBRC 15438 / GSS1).